A 286-amino-acid polypeptide reads, in one-letter code: MPSLIDIRRRIRSVKNTQQITKAMKMVSAAKLRRAQDRTIAARPYGTLLRKVLGNVAAAVANDESAAENPLLARREERRILLVVITGDKGLAGAFNTNLIKAASRFVAEHSGEQITFELIGRKGRDYFRKREVAVSGEAIGLAAKVKYEDTAAIARRAMELFRNQEIDAVYLVYNEFKSVVSQKLTLSRVLPAELPEQANPVDYIFEEPPADMLNILLPKYVEMEFYRALLESAASEHAARMTAMDSATSNAAEMIDKLTLYMNRVRQASITKEIIEVVSGAAAAE.

Belongs to the ATPase gamma chain family. As to quaternary structure, F-type ATPases have 2 components, CF(1) - the catalytic core - and CF(0) - the membrane proton channel. CF(1) has five subunits: alpha(3), beta(3), gamma(1), delta(1), epsilon(1). CF(0) has three main subunits: a, b and c.

Its subcellular location is the cell inner membrane. In terms of biological role, produces ATP from ADP in the presence of a proton gradient across the membrane. The gamma chain is believed to be important in regulating ATPase activity and the flow of protons through the CF(0) complex. The sequence is that of ATP synthase gamma chain from Solibacter usitatus (strain Ellin6076).